The following is a 278-amino-acid chain: Sulfur carrier protein FdhD (278 aa).

The active-site Cysteine persulfide intermediate is C121. F260–R265 contacts Mo-bis(molybdopterin guanine dinucleotide).

Belongs to the FdhD family.

The protein localises to the cytoplasm. Its function is as follows. Required for formate dehydrogenase (FDH) activity. Acts as a sulfur carrier protein that transfers sulfur from IscS to the molybdenum cofactor prior to its insertion into FDH. The chain is Sulfur carrier protein FdhD from Escherichia coli O127:H6 (strain E2348/69 / EPEC).